Reading from the N-terminus, the 180-residue chain is Dynactin subunit 6 (180 aa).

Belongs to the dynactin subunits 5/6 family. Dynactin subunit 6 subfamily. Subunit of dynactin, a multiprotein complex part of a tripartite complex with dynein and a adapter, such as BICDL1, BICD2 or HOOK3. The dynactin complex is built around ACTR1A/ACTB filament and consists of an actin-related filament composed of a shoulder domain, a pointed end and a barbed end.

It localises to the cytoplasm. The protein localises to the cytoskeleton. Its function is as follows. Part of the dynactin complex that activates the molecular motor dynein for ultra-processive transport along microtubules. In Caenorhabditis elegans, this protein is Dynactin subunit 6 (dnc-6).